A 217-amino-acid chain; its full sequence is Large ribosomal subunit protein uL4 (217 aa).

Positions 58–90 are disordered; the sequence is TAATKGRSDVSGGGKKPWRQKGTGRARSGTSRS.

This sequence belongs to the universal ribosomal protein uL4 family. Part of the 50S ribosomal subunit.

Its function is as follows. One of the primary rRNA binding proteins, this protein initially binds near the 5'-end of the 23S rRNA. It is important during the early stages of 50S assembly. It makes multiple contacts with different domains of the 23S rRNA in the assembled 50S subunit and ribosome. Functionally, forms part of the polypeptide exit tunnel. In Syntrophus aciditrophicus (strain SB), this protein is Large ribosomal subunit protein uL4.